We begin with the raw amino-acid sequence, 355 residues long: Chemerin-like receptor 2 (355 aa).

Residues 1–41 (MEDLEETLFEEFENYSYDLDYYSLESDLEEKVQLGVVHWVS) lie on the Extracellular side of the membrane. Asn-14 carries N-linked (GlcNAc...) asparagine glycosylation. The helical transmembrane segment at 42-62 (LVLYCLAFVLGIPGNAIVIWF) threads the bilayer. The Cytoplasmic portion of the chain corresponds to 63-73 (TGFKWKKTVTT). The chain crosses the membrane as a helical span at residues 74 to 94 (LWFLNLAIADFIFLLFLPLYI). At 95–112 (SYVAMNFHWPFGIWLCKA) the chain is on the extracellular side. Residues Cys-110 and Cys-187 are joined by a disulfide bond. Residues 113–133 (NSFTAQLNMFASVFFLTVISL) form a helical membrane-spanning segment. The Cytoplasmic portion of the chain corresponds to 134–154 (DHYIHLIHPVLSHRHRTLKNS). Residues 155-175 (LIVIIFIWLLASLIGGPALYF) traverse the membrane as a helical segment. Over 176 to 210 (RDTVEFNNHTLCYNNFQKHDPDLTLIRHHVLTWVK) the chain is Extracellular. A helical membrane pass occupies residues 211–231 (FIIGYLFPLLTMSICYLCLIF). Residues 232–247 (KVKKRSILISSRHFWT) are Cytoplasmic-facing. The helical transmembrane segment at 248 to 268 (ILVVVVAFVVCWTPYHLFSIW) threads the bilayer. Residues 269-286 (ELTIHHNSYSHHVMQAGI) lie on the Extracellular side of the membrane. Residues 287 to 307 (PLSTGLAFLNSCLNPILYVLI) form a helical membrane-spanning segment. Residues 308-355 (SKKFQARFRSSVAEILKYTLWEVSCSGTVSEQLRNSETKNLCLLETAQ) are Cytoplasmic-facing.

This sequence belongs to the chemokine-like receptor (CMKLR) family. Expressed in hippocampus.

The protein localises to the cell membrane. Its function is as follows. Receptor for chemoattractant adipokine chemerin/RARRES2 suggesting a role for this receptor in the regulation of inflammation and energy homesotasis. Signals mainly via beta-arrestin pathway. Binding of RARRES2 activates weakly G proteins, calcium mobilization and MAPK1/MAPK3 (ERK1/2) phosphorylation too. Also acts as a receptor for TAFA1, mediates its effects on neuronal stem-cell proliferation and differentiation via the activation of ROCK/ERK and ROCK/STAT3 signaling pathway. In terms of biological role, (Microbial infection) Coreceptor for HIV-1. This Homo sapiens (Human) protein is Chemerin-like receptor 2.